Consider the following 62-residue polypeptide: uncharacterized protein (62 aa).

Transmembrane regions (helical) follow at residues 7-27 (LLLL…VFIA) and 34-51 (IIAS…GFTL).

The protein localises to the cell membrane. This is an uncharacterized protein from Bacillus subtilis (strain 168).